The primary structure comprises 484 residues: tRNA sulfurtransferase (484 aa).

One can recognise a THUMP domain in the interval 63 to 167 (EAFADRLSCI…RENLYLVVNR (105 aa)). Residues 185 to 186 (LI), lysine 267, glycine 289, and glutamine 298 contribute to the ATP site. A disulfide bond links cysteine 346 and cysteine 458. The 79-residue stretch at 406–484 (VNSNEVIIDV…GYENVKVYRP (79 aa)) folds into the Rhodanese domain. Residue cysteine 458 is the Cysteine persulfide intermediate of the active site.

This sequence belongs to the ThiI family.

Its subcellular location is the cytoplasm. The enzyme catalyses [ThiI sulfur-carrier protein]-S-sulfanyl-L-cysteine + a uridine in tRNA + 2 reduced [2Fe-2S]-[ferredoxin] + ATP + H(+) = [ThiI sulfur-carrier protein]-L-cysteine + a 4-thiouridine in tRNA + 2 oxidized [2Fe-2S]-[ferredoxin] + AMP + diphosphate. It carries out the reaction [ThiS sulfur-carrier protein]-C-terminal Gly-Gly-AMP + S-sulfanyl-L-cysteinyl-[cysteine desulfurase] + AH2 = [ThiS sulfur-carrier protein]-C-terminal-Gly-aminoethanethioate + L-cysteinyl-[cysteine desulfurase] + A + AMP + 2 H(+). It functions in the pathway cofactor biosynthesis; thiamine diphosphate biosynthesis. Catalyzes the ATP-dependent transfer of a sulfur to tRNA to produce 4-thiouridine in position 8 of tRNAs, which functions as a near-UV photosensor. Also catalyzes the transfer of sulfur to the sulfur carrier protein ThiS, forming ThiS-thiocarboxylate. This is a step in the synthesis of thiazole, in the thiamine biosynthesis pathway. The sulfur is donated as persulfide by IscS. The polypeptide is tRNA sulfurtransferase (Shewanella sediminis (strain HAW-EB3)).